The following is a 346-amino-acid chain: Selenide, water dikinase (346 aa).

The active site involves Cys15. Residues Lys18 and 46-48 (SKD) contribute to the ATP site. Asp49 contacts Mg(2+). Residues Asp66, Asp89, and 137-139 (GHS) contribute to the ATP site. Asp89 provides a ligand contact to Mg(2+). Asp225 serves as a coordination point for Mg(2+).

This sequence belongs to the selenophosphate synthase 1 family. Class I subfamily. Homodimer. It depends on Mg(2+) as a cofactor.

It carries out the reaction hydrogenselenide + ATP + H2O = selenophosphate + AMP + phosphate + 2 H(+). Synthesizes selenophosphate from selenide and ATP. In Photobacterium profundum (strain SS9), this protein is Selenide, water dikinase.